The chain runs to 534 residues: uncharacterized protein (534 aa).

5 helical membrane-spanning segments follow: residues 4 to 22 (ILVL…RVSF), 24 to 46 (GISL…GWTI), 56 to 75 (ALFV…RGLA), 82 to 104 (AITG…RLLG), and 134 to 156 (PAAV…VLFV). Positions 167-187 (GDSDGTDSASETSGQSSAEIA) are disordered. Over residues 172-187 (TDSASETSGQSSAEIA) the composition is skewed to polar residues. 2 RCK C-terminal domains span residues 180-264 (GQSS…TLGE) and 265-349 (LQDT…AVGH). Transmembrane regions (helical) follow at residues 359-378 (LLSL…LSLQ), 382-401 (FSMS…ILGH), 408-430 (IRGS…LFLA), 445-467 (MERG…LVGF), 479-501 (WQSL…LTGA), and 511-533 (YVAA…VELI).

This sequence belongs to the AAE transporter (TC 2.A.81) family.

The protein localises to the cell membrane. This is an uncharacterized protein from Rhodopirellula baltica (strain DSM 10527 / NCIMB 13988 / SH1).